We begin with the raw amino-acid sequence, 49 residues long: Turripeptide OL47 (49 aa).

Residues 28 to 49 (RSDTEKKCTGGPDPCPPRQWPD) form a disordered region. A compositionally biased stretch (pro residues) spans 40 to 49 (DPCPPRQWPD).

Post-translationally, contains 4 disulfide bonds. In terms of tissue distribution, expressed by the venom duct.

The protein resides in the secreted. Functionally, acts as a neurotoxin by inhibiting an ion channel. This Iotyrris olangoensis (Sea snail) protein is Turripeptide OL47.